A 152-amino-acid chain; its full sequence is Urease accessory protein UreE (152 aa).

It belongs to the UreE family.

It localises to the cytoplasm. Functionally, involved in urease metallocenter assembly. Binds nickel. Probably functions as a nickel donor during metallocenter assembly. This Psychromonas ingrahamii (strain DSM 17664 / CCUG 51855 / 37) protein is Urease accessory protein UreE.